The sequence spans 122 residues: Putative iron-sulfur cluster insertion protein ErpA (122 aa).

Cys-50, Cys-114, and Cys-116 together coordinate iron-sulfur cluster.

This sequence belongs to the HesB/IscA family. As to quaternary structure, homodimer. It depends on iron-sulfur cluster as a cofactor.

Required for insertion of 4Fe-4S clusters. This chain is Putative iron-sulfur cluster insertion protein ErpA, found in Burkholderia mallei (strain NCTC 10247).